The following is a 316-amino-acid chain: L-lactate dehydrogenase (316 aa).

NAD(+) contacts are provided by residues M14, M14 to L150, I15, D35, Y67, G81, F82, V125, N127, and L150. R95 is a substrate binding site. 2 residues coordinate substrate: R158 and H182. H182 (proton acceptor) is an active-site residue.

This sequence belongs to the LDH/MDH superfamily. LDH family. In terms of assembly, homotetramer.

It catalyses the reaction (S)-lactate + NAD(+) = pyruvate + NADH + H(+). It participates in fermentation; pyruvate fermentation to lactate; (S)-lactate from pyruvate: step 1/1. The protein is L-lactate dehydrogenase of Plasmodium falciparum (isolate CDC / Honduras).